Here is a 207-residue protein sequence, read N- to C-terminus: Ribonuclease HII (207 aa).

The RNase H type-2 domain occupies 12–201; sequence DLVAGVDEVG…VRAAWEAREG (190 aa). A divalent metal cation contacts are provided by Asp-18, Glu-19, and Asp-110.

This sequence belongs to the RNase HII family. Mn(2+) serves as cofactor. Requires Mg(2+) as cofactor.

The protein localises to the cytoplasm. It carries out the reaction Endonucleolytic cleavage to 5'-phosphomonoester.. Its function is as follows. Endonuclease that specifically degrades the RNA of RNA-DNA hybrids. The sequence is that of Ribonuclease HII from Pseudomonas putida (strain ATCC 47054 / DSM 6125 / CFBP 8728 / NCIMB 11950 / KT2440).